Here is a 5098-residue protein sequence, read N- to C-terminus: Auxin transport protein BIG (5098 aa).

Ala2 is subject to N-acetylalanine. The next 2 membrane-spanning stretches (helical) occupy residues 1150–1170 and 1458–1478; these read AILL…NGLL and LAAE…IGTL. Residues 1539-1549 are compositionally biased toward acidic residues; it reads SVDEDEDDGTS. The disordered stretch occupies residues 1539–1562; it reads SVDEDEDDGTSDGEVASLDKEDEE. A UBR-type zinc finger spans residues 1573 to 1644; the sequence is KVCTFTSSGS…RGSSCQCLKP (72 aa). Residues 2613-2672 form a ZZ-type zinc finger; that stretch reads SVQYCCDGCSTVPILRRRWHCTVCPDFDLCEACYEVLDADRLPPPHTRDHPMTAIPIEVE. Zn(2+) contacts are provided by Cys2618, Cys2621, Cys2633, Cys2636, Cys2642, Cys2645, His2658, and His2662. A helical transmembrane segment spans residues 2813–2833; it reads SSLGEIVILVFMFFTLMLRSW. The segment at 3149 to 3174 is disordered; that stretch reads EVVTGSNRSGSQSVDSKKKKKGEDGH. Positions 3151 to 3162 are enriched in polar residues; the sequence is VTGSNRSGSQSV. The MYND-type; degenerate zinc finger occupies 3464–3504; it reads CPRCSRPVTDKHGICSNCHENAYQCRQCRNINYENLDSFLC. Coiled-coil stretches lie at residues 3537-3557 and 4313-4333; these read KKGL…YQQL and LEIL…NQEE. Positions 4569 to 5098 are UBR4 E3 catalytic module; the sequence is PSVPLILSML…QFVRSAIDKD (530 aa). Residues 4698-4817 form a HemiRING-type zinc finger; sequence GLACMVCREG…WDNLNALGRA (120 aa). Residues Cys4701, Cys4704, His4751, and Cys4754 each coordinate Zn(2+). The region spanning 4820 to 5098 is the UZI domain; that stretch reads SRLRLLTYDI…QFVRSAIDKD (279 aa). Positions 4891 to 4903 are enriched in low complexity; that stretch reads SSTSTATAPSSDS. A disordered region spans residues 4891 to 4915; that stretch reads SSTSTATAPSSDSRPLTPGSQLSST.

The protein belongs to the UBR4 family. In terms of tissue distribution, constitutively expressed in roots, rosette leaves, inflorescence stems, and flowers. Present in inflorescence meristems, floral meristems and vascular tissues.

The protein resides in the membrane. Functionally, required for auxin efflux and polar auxin transport (PAT) influencing auxin-mediated developmental responses (e.g. cell elongation, apical dominance, lateral root production, inflorescence architecture, general growth and development). Controls the elongation of the pedicels and stem internodes through auxin action. Involved in the expression modulation of light-regulated genes. Represses CAB1 and CAB3 genes expression in etiolated seedlings. Confers sensitivity to the auxin transport inhibitors N-1-naphthylphthalamic acid (NPA), 2-carboxyphenyl-3-phenylpropane-l,2-dione (CPD), and methyl-2-chloro-9-hydroxyfluorene-9-carboxylate (CFM). Influences the polarized subcellular distribution of the auxin transporter PIN1 in response to auxin transport inhibitors. Plays a role in the regulation of responses to phytohormones such as auxin, cytokinins, ethylene and gibberellic acid (GA), particularly during light-mediated stimuli (e.g. shade ovoidance, etiolation). Required for pericycle cell activation to form lateral root primordia (LRP) in both high and low phosphate P conditions. Necessary for the plant-growth promotion and lateral root development mediated by the fungus Trichoderma virens. This Arabidopsis thaliana (Mouse-ear cress) protein is Auxin transport protein BIG (BIG).